The following is a 311-amino-acid chain: MDRSTDLDIQELKMTREQYILATQQNNLPRPENAQLYPVGIYGWRKRCLYFFVLLLLVTMIVNLAMTIWILKVMNFTVDGMGNLRVTKKGIRLEGISEFLLPLYVKEIHSRKDSPLVLQSDRNVTVNARNHMGQLTGQLTVGAEAVEAQCKRFEVRASEDGRVLFSADEDEITIGAEKLKVTGTEGAVFGHSVETPHIRAEPSQDLRLESPTRSLKMEAPRGVQVSAAAGDFKATCRKELHLQSTEGEIFLNADSIRLGNLPIGSFSSSTSSSNSRQTVYELCVCPNGKLYLSPAGVGSTCQSSSSICLWN.

Topologically, residues 1–50 (MDRSTDLDIQELKMTREQYILATQQNNLPRPENAQLYPVGIYGWRKRCLY) are cytoplasmic. The chain crosses the membrane as a helical; Signal-anchor for type II membrane protein span at residues 51 to 71 (FFVLLLLVTMIVNLAMTIWIL). The Extracellular portion of the chain corresponds to 72–311 (KVMNFTVDGM…QSSSSICLWN (240 aa)). N-linked (GlcNAc...) asparagine glycosylation is found at Asn-75 and Asn-123. An intrachain disulfide couples Cys-285 to Cys-301.

Belongs to the sarcoglycan beta/delta/gamma/zeta family. As to expression, expressed in the heart, skeletal muscle and arterial vascular smooth muscle.

The protein resides in the cell membrane. The protein localises to the sarcolemma. Its subcellular location is the cytoplasm. It localises to the cytoskeleton. Component of the sarcoglycan complex, a subcomplex of the dystrophin-glycoprotein complex which forms a link between the F-actin cytoskeleton and the extracellular matrix. May play a role in the maintenance of striated muscle membrane stability. In Mus musculus (Mouse), this protein is Zeta-sarcoglycan (Sgcz).